The primary structure comprises 395 residues: Flap endonuclease 1 (395 aa).

Residues 1–108 (MGILGLSKLL…DELEMRRQKA (108 aa)) form an N-domain region. Asp34 lines the Mg(2+) pocket. A DNA-binding site is contributed by Arg74. Mg(2+) contacts are provided by Asp90, Glu162, Glu164, Asp183, and Asp185. The interval 126–257 (MMEKMSKRTV…QKAWEGIQRY (132 aa)) is I-domain. Glu162 contacts DNA. Residues Gly235 and Asp237 each coordinate DNA. Residue Asp237 participates in Mg(2+) binding. Residues 340-348 (TQGRLDSFF) form an interaction with PCNA region.

This sequence belongs to the XPG/RAD2 endonuclease family. FEN1 subfamily. Interacts with PCNA. Three molecules of FEN1 bind to one PCNA trimer with each molecule binding to one PCNA monomer. PCNA stimulates the nuclease activity without altering cleavage specificity. The cofactor is Mg(2+). Phosphorylated. Phosphorylation upon DNA damage induces relocalization to the nuclear plasma.

It localises to the nucleus. Its subcellular location is the nucleolus. The protein resides in the nucleoplasm. It is found in the mitochondrion. In terms of biological role, structure-specific nuclease with 5'-flap endonuclease and 5'-3' exonuclease activities involved in DNA replication and repair. During DNA replication, cleaves the 5'-overhanging flap structure that is generated by displacement synthesis when DNA polymerase encounters the 5'-end of a downstream Okazaki fragment. It enters the flap from the 5'-end and then tracks to cleave the flap base, leaving a nick for ligation. Also involved in the long patch base excision repair (LP-BER) pathway, by cleaving within the apurinic/apyrimidinic (AP) site-terminated flap. Acts as a genome stabilization factor that prevents flaps from equilibrating into structures that lead to duplications and deletions. Also possesses 5'-3' exonuclease activity on nicked or gapped double-stranded DNA, and exhibits RNase H activity. Also involved in replication and repair of rDNA and in repairing mitochondrial DNA. In Leishmania infantum, this protein is Flap endonuclease 1.